A 155-amino-acid polypeptide reads, in one-letter code: Ribosomal RNA large subunit methyltransferase H (155 aa).

S-adenosyl-L-methionine is bound by residues L73, G104, and L123–L128.

This sequence belongs to the RNA methyltransferase RlmH family. In terms of assembly, homodimer.

Its subcellular location is the cytoplasm. The catalysed reaction is pseudouridine(1915) in 23S rRNA + S-adenosyl-L-methionine = N(3)-methylpseudouridine(1915) in 23S rRNA + S-adenosyl-L-homocysteine + H(+). Its function is as follows. Specifically methylates the pseudouridine at position 1915 (m3Psi1915) in 23S rRNA. In Azotobacter vinelandii (strain DJ / ATCC BAA-1303), this protein is Ribosomal RNA large subunit methyltransferase H.